The sequence spans 199 residues: Guanylate kinase (199 aa).

Residues 19–198 enclose the Guanylate kinase-like domain; sequence VTVAVVSGPT…AVAHLVELLS (180 aa). ATP is bound at residue 26 to 33; sequence GPTAVGKG.

It belongs to the guanylate kinase family.

The protein localises to the cytoplasm. It carries out the reaction GMP + ATP = GDP + ADP. In terms of biological role, essential for recycling GMP and indirectly, cGMP. The sequence is that of Guanylate kinase from Cutibacterium acnes (strain DSM 16379 / KPA171202) (Propionibacterium acnes).